Here is a 63-residue protein sequence, read N- to C-terminus: Large ribosomal subunit protein bL32 (63 aa).

Positions 1 to 18 (MPVPKRKTSPSRRGKRRS) are enriched in basic residues. The interval 1-26 (MPVPKRKTSPSRRGKRRSHDGLRPEN) is disordered.

The protein belongs to the bacterial ribosomal protein bL32 family.

This chain is Large ribosomal subunit protein bL32, found in Neorickettsia sennetsu (strain ATCC VR-367 / Miyayama) (Ehrlichia sennetsu).